A 1166-amino-acid chain; its full sequence is DNA-directed RNA polymerase subunit beta (1166 aa).

The protein belongs to the RNA polymerase beta chain family. As to quaternary structure, the RNAP catalytic core consists of 2 alpha, 1 beta, 1 beta' and 1 omega subunit. When a sigma factor is associated with the core the holoenzyme is formed, which can initiate transcription.

It catalyses the reaction RNA(n) + a ribonucleoside 5'-triphosphate = RNA(n+1) + diphosphate. Functionally, DNA-dependent RNA polymerase catalyzes the transcription of DNA into RNA using the four ribonucleoside triphosphates as substrates. The protein is DNA-directed RNA polymerase subunit beta of Nocardioides sp. (strain ATCC BAA-499 / JS614).